The following is a 1241-amino-acid chain: High-affinity potassium transport protein (1241 aa).

The next 2 membrane-spanning stretches (helical) occupy residues 49-70 (NFIA…ILLY) and 78-98 (IDAL…TVDV). The N-linked (GlcNAc...) asparagine glycan is linked to N100. The helical transmembrane segment at 107-127 (IILYIICCISTPIAVHSCLAF) threads the bilayer. 3 disordered regions span residues 162 to 241 (TART…SLDD), 253 to 316 (KYHG…TPED), and 329 to 570 (EGTA…QLQQ). Positions 164–177 (RTMTKSKTGGTQRV) are enriched in polar residues. Basic and acidic residues-rich tracts occupy residues 181–191 (GKSDKRDDFQE) and 199–214 (VNRD…HNSR). Positions 215 to 238 (DSNSNANTNSSNNNSINHNGSSGS) are enriched in low complexity. N-linked (GlcNAc...) asparagine glycans are attached at residues N223, N227, N233, N257, N274, N353, and N364. Polar residues-rich tracts occupy residues 268-280 (NTAT…QKLK) and 345-365 (TDGT…TMNE). Over residues 366–375 (SKIRIQDKGA) the composition is skewed to basic and acidic residues. A compositionally biased stretch (polar residues) spans 380–411 (DQDSVLHSSNSSACTSDEDSLPTNFGGTTPSL). N-linked (GlcNAc...) asparagine glycans are attached at residues N389 and N442. Composition is skewed to basic residues over residues 446–455 (PPRKASKSKR) and 482–497 (HLPK…KRRL). Residues 498–509 (STGSIDKNSSSD) show a composition bias toward polar residues. N-linked (GlcNAc...) asparagine glycosylation is found at N505 and N538. The segment covering 520–545 (NDDDDGNEGDNMEEYFADNESGDEDD) has biased composition (acidic residues). Residues 561 to 570 (KQQQQHQLQQ) are compositionally biased toward low complexity. N-linked (GlcNAc...) asparagine glycans are attached at residues N584, N660, N681, N691, and N741. A disordered region spans residues 677–714 (NSHRNGSEDVSSDSNETTYPLNGNNDHSQNDANGYPTY). Residues 684 to 708 (EDVSSDSNETTYPLNGNNDHSQNDA) are compositionally biased toward polar residues. The next 5 membrane-spanning stretches (helical) occupy residues 784–806 (ILVV…WINL), 819–840 (VSPT…GLTL), 844–864 (SMMS…FIII), 868–888 (GFPI…PDLS), and 904–924 (CFTL…LVGL). N925 carries N-linked (GlcNAc...) asparagine glycosylation. 2 helical membrane-spanning segments follow: residues 929–949 (WILF…SKGY) and 977–997 (SIQV…AISI). The disordered stretch occupies residues 1011 to 1073 (YGEMGGKPED…ENENPNEEST (63 aa)). Positions 1021–1041 (TDTEEDGDCDDEDDDNEEEES) are enriched in acidic residues. Over residues 1050–1062 (GKSKKETKKKKKR) the composition is skewed to basic residues. The next 2 helical transmembrane spans lie at 1084–1104 (QLSF…ICER) and 1117–1137 (VFTI…SLGY). N1141 is a glycosylation site (N-linked (GlcNAc...) asparagine). Residues 1222–1241 (DELKHKRSLSRSSKRSTKTN) form a disordered region. Positions 1226–1241 (HKRSLSRSSKRSTKTN) are enriched in basic residues.

It belongs to the TrkH potassium transport family.

Its subcellular location is the membrane. In terms of biological role, this protein is required for high-affinity potassium transport. The sequence is that of High-affinity potassium transport protein (TRK1) from Saccharomyces uvarum (Yeast).